Reading from the N-terminus, the 565-residue chain is MTENNQDLKQNWTRHREGVVQAACGTQLTAKSWLTEAPLRMLMNNLDPEVAENPNELVVYGGIGRAARNWECYDKIVESLTQLNDDETLLVQSGKPVGVFKTHSNAPRVLIANSNLVPHWASWEHFNELDAKGLAMYGQMTAGSWIYIGSQGIVQGTYETFVEAGRQHYDGNLKGRWVLTAGLGGMGGAQPLAATLAGACSLNIECQQSRIDFRIKTRYVDEQAADLDDALARIAKYTAEGKAISIALCGNAAEILPEMVRRGVRPDMVTDQTSAHDPLNGYLPKGWTWDEYRVRSVSEPANVVKAAKQSMAEHVEAMLAFQQAGIPTFDYGNNIRQMAKEVGVANAFDFPGFVPAYIRPLFCRGIGPFRWAALSGDPEDIYKTDAKVKELIPDDDHLHNWLDMARERISFQGLPARICWVGLGQRAKLGLAFNEMVRSGELSAPVVIGRDHLDSGSVASPNRETESMRDGSDAVSDWPLLNALLNTASGATWVSLHHGGGVGMGFSQHSGMVIVCDGTDEAAERIARVLHNDPATGVMRHADAGYDIAIDCAREQGLNLPMIGR.

NAD(+) contacts are provided by residues 61-62, Gln-139, 185-187, Glu-205, Arg-210, 251-252, 272-276, 282-283, and Tyr-331; these read GG, GMG, NA, QTSAH, and YL. Cys-419 is a catalytic residue. A disordered region spans residues 453–472; it reads LDSGSVASPNRETESMRDGS. The segment covering 463–472 has biased composition (basic and acidic residues); that stretch reads RETESMRDGS. Gly-501 contributes to the NAD(+) binding site.

It belongs to the urocanase family. NAD(+) is required as a cofactor.

The protein localises to the cytoplasm. It catalyses the reaction 4-imidazolone-5-propanoate = trans-urocanate + H2O. It participates in amino-acid degradation; L-histidine degradation into L-glutamate; N-formimidoyl-L-glutamate from L-histidine: step 2/3. Functionally, catalyzes the conversion of urocanate to 4-imidazolone-5-propionate. The sequence is that of Urocanate hydratase from Pseudomonas savastanoi pv. phaseolicola (strain 1448A / Race 6) (Pseudomonas syringae pv. phaseolicola (strain 1448A / Race 6)).